The sequence spans 429 residues: Cell wall protein ECM33 (429 aa).

The N-terminal stretch at Met1–Ala19 is a signal peptide. N-linked (GlcNAc...) asparagine glycans are attached at residues Asn21, Asn56, Asn82, Asn196, Asn209, Asn227, Asn234, Asn241, Asn267, Asn279, Asn304, and Asn328. Residue Ser339 is modified to Phosphoserine. Low complexity predominate over residues Leu361–Ser401. The tract at residues Leu361–Glu410 is disordered. N-linked (GlcNAc...) asparagine glycosylation occurs at Asn389. Gly406 carries the GPI-anchor amidated glycine lipid modification. Residues Ala407–Leu429 constitute a propeptide, removed in mature form.

Belongs to the SPS2 family. Post-translationally, the GPI-anchor is attached to the protein in the endoplasmic reticulum and serves to target the protein to the cell surface. There, the glucosamine-inositol phospholipid moiety is cleaved off and the GPI-modified mannoprotein is covalently attached via its lipidless GPI glycan remnant to the 1,6-beta-glucan of the outer cell wall layer.

It localises to the cell membrane. The protein resides in the secreted. It is found in the cell wall. In terms of biological role, required for proper cell wall integrity and for the correct assembly of the mannoprotein outer layer of the cell wall. Important for apical bud growth. The sequence is that of Cell wall protein ECM33 (ECM33) from Saccharomyces cerevisiae (strain AWRI1631) (Baker's yeast).